The sequence spans 71 residues: Small ribosomal subunit protein bS18 (71 aa).

This sequence belongs to the bacterial ribosomal protein bS18 family. Part of the 30S ribosomal subunit. Forms a tight heterodimer with protein bS6.

In terms of biological role, binds as a heterodimer with protein bS6 to the central domain of the 16S rRNA, where it helps stabilize the platform of the 30S subunit. The protein is Small ribosomal subunit protein bS18 of Synechocystis sp. (strain ATCC 27184 / PCC 6803 / Kazusa).